A 79-amino-acid polypeptide reads, in one-letter code: Large ribosomal subunit protein bL31c (79 aa).

Belongs to the bacterial ribosomal protein bL31 family. Type A subfamily. In terms of assembly, part of the 50S ribosomal subunit.

Its subcellular location is the plastid. It localises to the chloroplast. Its function is as follows. Binds the 23S rRNA. This is Large ribosomal subunit protein bL31c from Gracilaria tenuistipitata var. liui (Red alga).